Here is a 449-residue protein sequence, read N- to C-terminus: Tubulin alpha chain (449 aa).

Positions 1–4 (MREC) match the MREC motif motif. Residue Q11 coordinates GTP. Position 40 is an N6-acetyllysine (K40). Residues E71, S140, G144, T145, T179, N206, and N228 each contribute to the GTP site. E71 serves as a coordination point for Mg(2+). E254 is a catalytic residue. Residues 430–449 (KDYEEVGADSADAEDEGEEY) are disordered. Residues 431-449 (DYEEVGADSADAEDEGEEY) show a composition bias toward acidic residues.

The protein belongs to the tubulin family. As to quaternary structure, dimer of alpha and beta chains. A typical microtubule is a hollow water-filled tube with an outer diameter of 25 nm and an inner diameter of 15 nM. Alpha-beta heterodimers associate head-to-tail to form protofilaments running lengthwise along the microtubule wall with the beta-tubulin subunit facing the microtubule plus end conferring a structural polarity. Microtubules usually have 13 protofilaments but different protofilament numbers can be found in some organisms and specialized cells. It depends on Mg(2+) as a cofactor. Some glutamate residues at the C-terminus are polyglycylated, resulting in polyglycine chains on the gamma-carboxyl group. Glycylation is mainly limited to tubulin incorporated into axonemes (cilia and flagella) whereas glutamylation is prevalent in neuronal cells, centrioles, axonemes, and the mitotic spindle. Both modifications can coexist on the same protein on adjacent residues, and lowering polyglycylation levels increases polyglutamylation, and reciprocally. The precise function of polyglycylation is still unclear. Post-translationally, some glutamate residues at the C-terminus are polyglutamylated, resulting in polyglutamate chains on the gamma-carboxyl group. Polyglutamylation plays a key role in microtubule severing by spastin (SPAST). SPAST preferentially recognizes and acts on microtubules decorated with short polyglutamate tails: severing activity by SPAST increases as the number of glutamates per tubulin rises from one to eight, but decreases beyond this glutamylation threshold. In terms of processing, acetylation of alpha chains at Lys-40 is located inside the microtubule lumen. This modification has been correlated with increased microtubule stability, intracellular transport and ciliary assembly. Undergoes a tyrosination/detyrosination cycle, the cyclic removal and re-addition of a C-terminal tyrosine residue by the enzymes tubulin tyrosine carboxypeptidase (MATCAP1, VASH1 or VASH2) and tubulin tyrosine ligase (TTL), respectively. Post-translationally, tyrosination promotes microtubule interaction with CAP-Gly microtubule plus-end tracking proteins. Tyrosinated tubulins regulate the initiation of dynein-driven motility. In terms of processing, detyrosination is involved in metaphase plate congression by guiding chromosomes during mitosis. Detyrosination increases microtubules-dependent mechanotransduction in dystrophic cardiac and skeletal muscle. In cardiomyocytes, detyrosinated microtubules are required to resist to contractile compression during contraction.

It localises to the cytoplasm. Its subcellular location is the cytoskeleton. It carries out the reaction GTP + H2O = GDP + phosphate + H(+). In terms of biological role, tubulin is the major constituent of microtubules, a cylinder consisting of laterally associated linear protofilaments composed of alpha- and beta-tubulin heterodimers. Microtubules grow by the addition of GTP-tubulin dimers to the microtubule end, where a stabilizing cap forms. Below the cap, tubulin dimers are in GDP-bound state, owing to GTPase activity of alpha-tubulin. The protein is Tubulin alpha chain (tuba) of Xenopus laevis (African clawed frog).